Consider the following 398-residue polypeptide: Apolipoprotein L1 (398 aa).

Positions 1–27 (MEGAALLRVSVLCIWMSALFLGVGVRA) are cleaved as a signal peptide. The span at 35-47 (QQNVPSGTDTGDP) shows a compositional bias: polar residues. The disordered stretch occupies residues 35 to 55 (QQNVPSGTDTGDPQSKPLGDW). An N-linked (GlcNAc...) asparagine glycan is attached at Asn261. Residues 297 to 317 (PHASASRPRVTEPISAESGEQ) are disordered. Ser311 and Ser314 each carry phosphoserine; by FAM20C.

This sequence belongs to the apolipoprotein L family. As to quaternary structure, in plasma, interacts with APOA1 and mainly associated with large high density lipoprotein particles. Phosphorylated by FAM20C in the extracellular medium. As to expression, plasma. Found on APOA-I-containing high density lipoprotein (HDL3). Expressed in pancreas, lung, prostate, liver, placenta and spleen.

The protein resides in the secreted. Its function is as follows. May play a role in lipid exchange and transport throughout the body. May participate in reverse cholesterol transport from peripheral cells to the liver. This is Apolipoprotein L1 (APOL1) from Homo sapiens (Human).